The following is a 259-amino-acid chain: L-cysteine S-thiosulfotransferase subunit SoxA (259 aa).

The N-terminal stretch at Met-1–Ala-23 is a signal peptide. In terms of domain architecture, Cytochrome c spans Val-50–Ser-135. Heme c is bound by residues Cys-70, Cys-73, His-74, Cys-108, Cys-171, Cys-174, and His-175. Arg-216 provides a ligand contact to substrate. Cys-220 lines the heme c pocket. Catalysis depends on Cys-220, which acts as the Cysteine persulfide intermediate.

Belongs to the SoxA family. Heterodimer of SoxA and SoxX. Heme c is required as a cofactor. Post-translationally, cysteine persulfide at Cys-220.

It is found in the periplasm. It catalyses the reaction L-cysteinyl-[SoxY protein] + thiosulfate + 2 Fe(III)-[cytochrome c] = S-sulfosulfanyl-L-cysteinyl-[SoxY protein] + 2 Fe(II)-[cytochrome c] + 2 H(+). The enzyme catalyses S-sulfanyl-L-cysteinyl-[SoxY protein] + thiosulfate + 2 Fe(III)-[cytochrome c] = S-(2-sulfodisulfanyl)-L-cysteinyl-[SoxY protein] + 2 Fe(II)-[cytochrome c] + 2 H(+). In terms of biological role, C-type diheme cytochrome, which is part of the SoxAX cytochrome complex involved in sulfur oxidation. The SoxAX complex catalyzes the formation of a heterodisulfide bond between the conserved cysteine residue on a sulfur carrier SoxYZ complex subunit SoxY and thiosulfate or other inorganic sulfur substrates. This leads to the liberation of two electrons, which may be transferred from the SoxAX complex to another cytochrome c that then channels them into the respiratory electron transport chain. Some electrons may be used for reductive CO(2) fixation. This Hydrogenobacter thermophilus (strain DSM 6534 / IAM 12695 / TK-6) protein is L-cysteine S-thiosulfotransferase subunit SoxA.